Here is a 176-residue protein sequence, read N- to C-terminus: Cathelicidin-2 (176 aa).

Positions 1–29 (METQGASLSLGRWSLWLLLLGLVLPSASA) are cleaved as a signal peptide. Residue glutamine 30 is modified to Pyrrolidone carboxylic acid. Residues 30–130 (QALSYREAVL…DINCNELQSV (101 aa)) constitute a propeptide that is removed on maturation. 2 disulfides stabilise this stretch: cysteine 85–cysteine 96 and cysteine 107–cysteine 124. The segment at 135 to 176 (PIRRPPIRPPFRPPFRPPVRPPIRPPFRPPFRPPIGPFPGRR) is disordered. Positions 141-176 (IRPPFRPPFRPPVRPPIRPPFRPPFRPPIGPFPGRR) are enriched in pro residues. Proline amide is present on proline 173. Residues 174–176 (GRR) constitute a propeptide, removed in mature form.

It belongs to the cathelicidin family. Post-translationally, elastase is responsible for its maturation.

It is found in the secreted. Its function is as follows. Binds to the lipid A moiety of bacterial lipipolysaccharides (LPS), a glycolipid present in the outer membrane of all Gram-negative bacteria. Potent antimicrobial activity. The sequence is that of Cathelicidin-2 (CATHL2) from Ovis aries (Sheep).